The chain runs to 448 residues: Putative diacyglycerol O-acyltransferase MT3848 (448 aa).

Histidine 136 functions as the Proton acceptor in the catalytic mechanism.

The protein belongs to the long-chain O-acyltransferase family.

It catalyses the reaction an acyl-CoA + a 1,2-diacyl-sn-glycerol = a triacyl-sn-glycerol + CoA. It participates in glycerolipid metabolism; triacylglycerol biosynthesis. In Mycobacterium tuberculosis (strain CDC 1551 / Oshkosh), this protein is Putative diacyglycerol O-acyltransferase MT3848.